The following is a 513-amino-acid chain: GMP synthase [glutamine-hydrolyzing] (513 aa).

A Glutamine amidotransferase type-1 domain is found at 8 to 198 (KIIVLDYGSQ…ALNTCGAKGN (191 aa)). Cys85 (nucleophile) is an active-site residue. Active-site residues include His172 and Glu174. Residues 199–388 (WSMENFIDMQ…LGMPDEIVWR (190 aa)) form the GMPS ATP-PPase domain. 226-232 (SGGVDSS) serves as a coordination point for ATP.

As to quaternary structure, homodimer.

It catalyses the reaction XMP + L-glutamine + ATP + H2O = GMP + L-glutamate + AMP + diphosphate + 2 H(+). It functions in the pathway purine metabolism; GMP biosynthesis; GMP from XMP (L-Gln route): step 1/1. Functionally, catalyzes the synthesis of GMP from XMP. The protein is GMP synthase [glutamine-hydrolyzing] of Lactococcus lactis subsp. cremoris (strain SK11).